The primary structure comprises 613 residues: Oxidoreductase GME11365 (613 aa).

3 Plastocyanin-like domains span residues 72–188, 198–331, and 431–571; these read ISEA…HGPS, PLLI…WIHG, and VDWR…EQPS.

Belongs to the multicopper oxidase family.

Its pathway is secondary metabolite biosynthesis. Its function is as follows. Oxidoreductase; part of the gene cluster that mediates the biosynthesis of dibenzodioxocinones such as pestalotiollide B, a novel class of inhibitors against cholesterol ester transfer protein (CEPT). The biosynthesis initiates from condensation of acetate and malonate units catalyzed by the non-reducing PKS pks8/GME11356. Pks8/GME11356 lacks a thioesterase (TE) domain, which is important to the cyclizing of the third ring of atrochrysone carboxylic acid, and the esterase GME11355 might play the role of TE and catalyzes the cyclization reaction of the C ring. The lactamase-like protein GME11357 (or other beta-lactamases in Pestalotiopsis microspora) probably hydrolyzes the thioester bond between the ACP of pks8/GME11356 and the intermediate to release atrochrysone carboxylic acid, which is spontaneously dehydrates to form endocrocin anthrone. Endocrocin anthrone is further converted to emodin via the endocrocin intermediate. Emodin is then oxidized by several enzymes such as the Baeyer-Villiger oxidase GME11358, the oxidoreductase GME11367, the short chain dehydrogenase/reductase GME11373, as well as by other oxidoreductases from the cluster, to modify the A and C rings and open the B ring, and finally yield monodictyphenone. The prenyltransferase GME11375 may catalyze the addition reaction between the C5 side chains and the carbon bone of dibenzodioxocinones. The remaining biochemical reactions to the final product dibenzodioxocinones should be methylation catalyzed by methyltransferase GME11366 and reduction and lactonization reaction catalyzed by a series of oxidordeuctases. The chain is Oxidoreductase GME11365 from Pestalotiopsis microspora.